Reading from the N-terminus, the 279-residue chain is Undecaprenyl-diphosphatase (279 aa).

8 helical membrane-spanning segments follow: residues 1-21 (MVLE…LPIS), 39-59 (GRFF…LYFF), 96-116 (LLLV…VRFV), 128-148 (FTMG…DALF), 155-175 (IFQI…FAII), 201-221 (FSFL…LVAG), 231-251 (YSLI…SALL), and 259-279 (FVLF…VSFF).

This sequence belongs to the UppP family.

Its subcellular location is the cell membrane. The enzyme catalyses di-trans,octa-cis-undecaprenyl diphosphate + H2O = di-trans,octa-cis-undecaprenyl phosphate + phosphate + H(+). In terms of biological role, catalyzes the dephosphorylation of undecaprenyl diphosphate (UPP). Confers resistance to bacitracin. The polypeptide is Undecaprenyl-diphosphatase (Tropheryma whipplei (strain TW08/27) (Whipple's bacillus)).